A 504-amino-acid chain; its full sequence is Cytochrome P450 6B7 (504 aa).

Cysteine 445 is a heme binding site.

It belongs to the cytochrome P450 family. Requires heme as cofactor.

Its subcellular location is the endoplasmic reticulum membrane. It is found in the microsome membrane. The catalysed reaction is an organic molecule + reduced [NADPH--hemoprotein reductase] + O2 = an alcohol + oxidized [NADPH--hemoprotein reductase] + H2O + H(+). The polypeptide is Cytochrome P450 6B7 (CYP6B7) (Helicoverpa armigera (Cotton bollworm)).